A 213-amino-acid polypeptide reads, in one-letter code: MGISLWLCPYGHSPEYETFKTLIESLQTLFPNSPVFEPHVTVCSGLSCENMEEVHKVLEMAHHAINAVKSKVDSENALVEFDGFNIGKKYFEKCRLECKPNPMLYSLAKLIRSMFVGELNIDTWLFEEFHPHLSLAYSDIYPMDQAMIRLIRQRIEDLFDVTTEEIESHSRDQDAYKLQHTLKGWSFPLTFKVVRCEGPVEEWEVLSEVTVHG.

Histidine 39 (proton donor/acceptor) is an active-site residue. Threonine 41 serves as a coordination point for substrate. Histidine 132 acts as the Proton donor/acceptor in catalysis. The substrate site is built by serine 134 and tyrosine 137.

It belongs to the 2H phosphoesterase superfamily. CPD1 family.

It localises to the golgi apparatus. The enzyme catalyses a nucleoside 2',3'-cyclic phosphate + H2O = a nucleoside 2'-phosphate + H(+). Functionally, involved in the metabolism of ADP-ribose 1',2'-cyclic phosphate which is produced as a consequence of tRNA splicing. The protein is 2',3'-cyclic-nucleotide 3'-phosphodiesterase (CPD1) of Kluyveromyces lactis (strain ATCC 8585 / CBS 2359 / DSM 70799 / NBRC 1267 / NRRL Y-1140 / WM37) (Yeast).